Consider the following 156-residue polypeptide: Single-stranded DNA-binding protein 1 (156 aa).

Residues 1 to 107 (MNETMICAVG…IDAVAIGHDL (107 aa)) enclose the SSB domain. Over residues 114–124 (FRRTARTEAST) the composition is skewed to low complexity. The disordered stretch occupies residues 114–156 (FRRTARTEASTSPPRPEPNWEVPAGGTPGEPVPEQRPDPVPVG).

Homotetramer.

In Streptomyces coelicolor (strain ATCC BAA-471 / A3(2) / M145), this protein is Single-stranded DNA-binding protein 1 (ssb1).